A 147-amino-acid polypeptide reads, in one-letter code: Signal peptidase complex subunit 3 (147 aa).

Residues 1-6 (MHSWVQ) lie on the Cytoplasmic side of the membrane. Residues 7–29 (RLLTTATTAALLLLAACCAASAL) traverse the membrane as a helical; Signal-anchor for type II membrane protein segment. Over 30-147 (DAFHVPSVQA…EFNLPDSYTS (118 aa)) the chain is Lumenal.

The protein belongs to the SPCS3 family. Component of the signal peptidase complex (SPC) composed of a catalytic subunit SEC11 and three accessory subunits SPCS1, SPCS2 and SPCS3. The complex induces a local thinning of the ER membrane which is used to measure the length of the signal peptide (SP) h-region of protein substrates. This ensures the selectivity of the complex towards h-regions shorter than 18-20 amino acids.

It is found in the endoplasmic reticulum membrane. In terms of biological role, essential component of the signal peptidase complex (SPC) which catalyzes the cleavage of N-terminal signal sequences from nascent proteins as they are translocated into the lumen of the endoplasmic reticulum. Essential for the SPC catalytic activity, possibly by stabilizing and positioning the active center of the complex close to the lumenal surface. In Oryza sativa subsp. japonica (Rice), this protein is Signal peptidase complex subunit 3.